A 346-amino-acid polypeptide reads, in one-letter code: Galactitol 1-phosphate 5-dehydrogenase (346 aa).

Zn(2+) is bound by residues C38, H59, C89, C92, C95, C103, and E144.

This sequence belongs to the zinc-containing alcohol dehydrogenase family. Requires Zn(2+) as cofactor.

It catalyses the reaction galactitol 1-phosphate + NAD(+) = keto-D-tagatose 6-phosphate + NADH + H(+). Converts galactitol 1-phosphate to tagatose 6-phosphate. The polypeptide is Galactitol 1-phosphate 5-dehydrogenase (gatD) (Escherichia coli O157:H7).